A 741-amino-acid chain; its full sequence is 1,4-alpha-glucan branching enzyme GlgB 2 (741 aa).

The disordered stretch occupies residues Met-1 to Ala-38. Residue Asp-421 is the Nucleophile of the active site. Catalysis depends on Glu-474, which acts as the Proton donor.

Belongs to the glycosyl hydrolase 13 family. GlgB subfamily. In terms of assembly, monomer.

It catalyses the reaction Transfers a segment of a (1-&gt;4)-alpha-D-glucan chain to a primary hydroxy group in a similar glucan chain.. The protein operates within glycan biosynthesis; glycogen biosynthesis. Its function is as follows. Catalyzes the formation of the alpha-1,6-glucosidic linkages in glycogen by scission of a 1,4-alpha-linked oligosaccharide from growing alpha-1,4-glucan chains and the subsequent attachment of the oligosaccharide to the alpha-1,6 position. The sequence is that of 1,4-alpha-glucan branching enzyme GlgB 2 (glgB2) from Streptomyces coelicolor (strain ATCC BAA-471 / A3(2) / M145).